We begin with the raw amino-acid sequence, 211 residues long: Probable GTP-binding protein EngB (211 aa).

The EngB-type G domain occupies 21–205; sequence LMATIVFVGR…KNRIYEIIRE (185 aa). GTP is bound by residues 29–36, 54–58, 71–74, 151–154, and 184–186; these read GRSNVGKS, GVTRK, DMPG, NKLD, and ISA. The Mg(2+) site is built by S36 and T56.

This sequence belongs to the TRAFAC class TrmE-Era-EngA-EngB-Septin-like GTPase superfamily. EngB GTPase family. Mg(2+) is required as a cofactor.

In terms of biological role, necessary for normal cell division and for the maintenance of normal septation. This chain is Probable GTP-binding protein EngB, found in Pyrococcus abyssi (strain GE5 / Orsay).